We begin with the raw amino-acid sequence, 291 residues long: 4-diphosphocytidyl-2-C-methyl-D-erythritol kinase (291 aa).

The active site involves Lys-10. ATP is bound at residue 94–104 (PVSAGLAGGSS). Residue Asp-136 is part of the active site.

The protein belongs to the GHMP kinase family. IspE subfamily.

The catalysed reaction is 4-CDP-2-C-methyl-D-erythritol + ATP = 4-CDP-2-C-methyl-D-erythritol 2-phosphate + ADP + H(+). Its pathway is isoprenoid biosynthesis; isopentenyl diphosphate biosynthesis via DXP pathway; isopentenyl diphosphate from 1-deoxy-D-xylulose 5-phosphate: step 3/6. Catalyzes the phosphorylation of the position 2 hydroxy group of 4-diphosphocytidyl-2C-methyl-D-erythritol. In Listeria monocytogenes serotype 4a (strain HCC23), this protein is 4-diphosphocytidyl-2-C-methyl-D-erythritol kinase.